The chain runs to 87 residues: Small ribosomal subunit protein bS20 (87 aa).

A disordered region spans residues 1–21; it reads MANIKQQIKRNKTNEKRRLKN. Basic residues predominate over residues 7 to 20; it reads QIKRNKTNEKRRLK.

It belongs to the bacterial ribosomal protein bS20 family.

Binds directly to 16S ribosomal RNA. The protein is Small ribosomal subunit protein bS20 of Phytoplasma mali (strain AT).